A 513-amino-acid chain; its full sequence is ATP synthase subunit alpha (513 aa).

169-176 (GDRQCGKT) lines the ATP pocket.

Belongs to the ATPase alpha/beta chains family. As to quaternary structure, F-type ATPases have 2 components, CF(1) - the catalytic core - and CF(0) - the membrane proton channel. CF(1) has five subunits: alpha(3), beta(3), gamma(1), delta(1), epsilon(1). CF(0) has three main subunits: a(1), b(2) and c(9-12). The alpha and beta chains form an alternating ring which encloses part of the gamma chain. CF(1) is attached to CF(0) by a central stalk formed by the gamma and epsilon chains, while a peripheral stalk is formed by the delta and b chains.

Its subcellular location is the cell inner membrane. It catalyses the reaction ATP + H2O + 4 H(+)(in) = ADP + phosphate + 5 H(+)(out). Its function is as follows. Produces ATP from ADP in the presence of a proton gradient across the membrane. The alpha chain is a regulatory subunit. The protein is ATP synthase subunit alpha of Burkholderia ambifaria (strain MC40-6).